A 401-amino-acid chain; its full sequence is Argininosuccinate synthase (401 aa).

Position 9–17 (9–17 (AYSGGLDTS)) interacts with ATP. Y86 provides a ligand contact to L-citrulline. G116 serves as a coordination point for ATP. L-aspartate is bound by residues T118, N122, and D123. N122 contributes to the L-citrulline binding site. 5 residues coordinate L-citrulline: R126, S174, S183, E259, and Y271.

The protein belongs to the argininosuccinate synthase family. Type 1 subfamily. In terms of assembly, homotetramer.

Its subcellular location is the cytoplasm. The enzyme catalyses L-citrulline + L-aspartate + ATP = 2-(N(omega)-L-arginino)succinate + AMP + diphosphate + H(+). It functions in the pathway amino-acid biosynthesis; L-arginine biosynthesis; L-arginine from L-ornithine and carbamoyl phosphate: step 2/3. This Bacillus cytotoxicus (strain DSM 22905 / CIP 110041 / 391-98 / NVH 391-98) protein is Argininosuccinate synthase.